The following is a 970-amino-acid chain: Serine/threonine-protein kinase PLK4 (970 aa).

In terms of domain architecture, Protein kinase spans 12–265 (FKVGNLLGKG…LSSVLDHPFM (254 aa)). ATP-binding positions include 18–26 (LGKGSFAGV) and Lys-41. N6-acetyllysine is present on residues Lys-45 and Lys-46. Catalysis depends on Asp-136, which acts as the Proton acceptor. The disordered stretch occupies residues 324–373 (VFPKNKSSSDFSSSGDGNSFYTQWGNQETSNSGRGRVIQDAEERPHSRYL). The span at 327–343 (KNKSSSDFSSSGDGNSF) shows a compositional bias: low complexity. The segment covering 344-356 (YTQWGNQETSNSG) has biased composition (polar residues). Residues 360–369 (VIQDAEERPH) show a composition bias toward basic and acidic residues. Ser-401 carries the phosphoserine modification. The tract at residues 498-540 (ISPTRDFQGHPDLQKDTSKNAWTDTKVKKNSDASDNAHSVKQP) is disordered. A compositionally biased stretch (basic and acidic residues) spans 504–515 (FQGHPDLQKDTS). Residues 530–540 (ASDNAHSVKQP) are compositionally biased toward polar residues. Residues 586 to 699 (TLRSITSPLV…SRFVQLVRSK (114 aa)) form the Cryptic POLO box 1 (CPB1) domain. Ser-665 carries the post-translational modification Phosphoserine. The 114-residue stretch at 700–813 (SPKITYFTRY…GRKPGSTSSP (114 aa)) folds into the Cryptic POLO box 2 (CPB2) domain. The disordered stretch occupies residues 808–829 (GSTSSPKALSPPPSVDSNYPTR). Residue Ser-817 is modified to Phosphoserine. A POLO box domain is found at 886–964 (QLLKSVFVKN…LSSILLMFSN (79 aa)).

The protein belongs to the protein kinase superfamily. Ser/Thr protein kinase family. CDC5/Polo subfamily. In terms of assembly, homodimer. Interacts with CEP152 (via N-terminus). Interacts with CEP78; this interaction may be important for proper PLK4 localization to the centriole and PLK4-induced overduplication of centrioles. Interacts with CEP131. Interacts simultaneously with TENT5C and CEP192. Interacts with TENT5C; this interaction leads to the TENT5C recruitment in the centrosome. Interacts with CEP85; this interaction may be important in cell migration and centriole assembly. Post-translationally, ubiquitinated; leading to its degradation by the proteasome. Deubiquitinated by USP54; leading to PLK4 stabilization. In terms of processing, tyrosine-phosphorylated by TEC. Acetylation by KAT2A and KAT2B impairs kinase activity by shifting the kinase to an inactive conformation.

Its subcellular location is the cytoplasm. It localises to the cytoskeleton. The protein resides in the microtubule organizing center. The protein localises to the centrosome. It is found in the centriole. Its subcellular location is the nucleus. It localises to the nucleolus. The protein resides in the cleavage furrow. The catalysed reaction is L-seryl-[protein] + ATP = O-phospho-L-seryl-[protein] + ADP + H(+). It catalyses the reaction L-threonyl-[protein] + ATP = O-phospho-L-threonyl-[protein] + ADP + H(+). In terms of biological role, serine/threonine-protein kinase that plays a central role in centriole duplication. Able to trigger procentriole formation on the surface of the parental centriole cylinder, leading to the recruitment of centriole biogenesis proteins such as SASS6, CPAP, CCP110, CEP135 and gamma-tubulin. When overexpressed, it is able to induce centrosome amplification through the simultaneous generation of multiple procentrioles adjoining each parental centriole during S phase. Phosphorylates 'Ser-151' of FBXW5 during the G1/S transition, leading to inhibit FBXW5 ability to ubiquitinate SASS6. Its central role in centriole replication suggests a possible role in tumorigenesis, centrosome aberrations being frequently observed in tumors. Also involved in deuterosome-mediated centriole amplification in multiciliated that can generate more than 100 centrioles. Also involved in trophoblast differentiation by phosphorylating HAND1, leading to disrupt the interaction between HAND1 and MDFIC and activate HAND1. Phosphorylates CDC25C and CHEK2. Required for the recruitment of STIL to the centriole and for STIL-mediated centriole amplification. Phosphorylates CEP131 and PCM1 which is essential for proper organization and integrity of centriolar satellites. This Pongo abelii (Sumatran orangutan) protein is Serine/threonine-protein kinase PLK4.